The primary structure comprises 327 residues: Probable cell division protein WhiA (327 aa).

The H-T-H motif DNA-binding region spans 275 to 308; it reads SLEELGRLADPPMTKDAVAGRIRRLLSMADRKAK.

Belongs to the WhiA family.

Its function is as follows. Involved in cell division and chromosome segregation. The polypeptide is Probable cell division protein WhiA (Mycobacterium avium (strain 104)).